Here is a 1119-residue protein sequence, read N- to C-terminus: G8 domain-containing protein DDB_G0288475 (1119 aa).

The N-terminal stretch at 1–22 (MKYSSFLLLFIYIFFILNNINA) is a signal peptide. The G8 domain maps to 276–404 (TIWTSGVVPL…YHNTWTKLAA (129 aa)). Residues asparagine 308, asparagine 559, asparagine 736, asparagine 854, asparagine 968, asparagine 1035, asparagine 1056, and asparagine 1070 are each glycosylated (N-linked (GlcNAc...) asparagine).

The protein belongs to the comF family.

The protein localises to the secreted. This is G8 domain-containing protein DDB_G0288475 from Dictyostelium discoideum (Social amoeba).